A 73-amino-acid chain; its full sequence is Putative membrane protein insertion efficiency factor (73 aa).

The protein belongs to the UPF0161 family.

Its subcellular location is the cell inner membrane. Could be involved in insertion of integral membrane proteins into the membrane. The polypeptide is Putative membrane protein insertion efficiency factor (Rickettsia bellii (strain RML369-C)).